We begin with the raw amino-acid sequence, 220 residues long: Probable GTP-binding protein EngB (220 aa).

The EngB-type G domain maps to 24–207; sequence PQPEVAFAGR…HELIESWIAP (184 aa). GTP is bound by residues 32–39, 59–63, 81–84, 148–151, and 185–188; these read GRSNAGKS, GRTQH, DLPG, TKCD, and LFSA. Residues Ser39 and Thr61 each contribute to the Mg(2+) site.

It belongs to the TRAFAC class TrmE-Era-EngA-EngB-Septin-like GTPase superfamily. EngB GTPase family. Mg(2+) serves as cofactor.

Functionally, necessary for normal cell division and for the maintenance of normal septation. This chain is Probable GTP-binding protein EngB, found in Paraburkholderia phymatum (strain DSM 17167 / CIP 108236 / LMG 21445 / STM815) (Burkholderia phymatum).